The chain runs to 683 residues: U4/U6 small nuclear ribonucleoprotein Prp3 (683 aa).

The PWI domain occupies 1–87 (MALSKRELDE…HSKSSSDRSR (87 aa)). Over residues 73 to 107 (GRSSRHSKSSSDRSRKRELKEVFGDDSEISKESSG) the composition is skewed to basic and acidic residues. The segment at 73–135 (GRSSRHSKSS…IPGPPSESPG (63 aa)) is disordered. Lys139 is covalently cross-linked (Glycyl lysine isopeptide (Lys-Gly) (interchain with G-Cter in SUMO2)). Residues 153–183 (IEERKKQLSFISPPTPQPKTPSSSQPERLPI) are disordered. Phosphoserine is present on Ser164. Residue Thr167 is modified to Phosphothreonine. Glycyl lysine isopeptide (Lys-Gly) (interchain with G-Cter in SUMO2) cross-links involve residues Lys244 and Lys252. The interval 416 to 550 (NLVEHPAQLN…VHISVYRVRN (135 aa)) is mediates interaction with SART3. The residue at position 619 (Ser619) is a Phosphoserine.

In terms of assembly, component of the precatalytic spliceosome (spliceosome B complex). Component of the U4/U6-U5 tri-snRNP complex, a building block of the precatalytic spliceosome (spliceosome B complex). The U4/U6-U5 tri-snRNP complex is composed of the U4, U6 and U5 snRNAs and at least PRPF3, PRPF4, PRPF6, PRPF8, PRPF31, SNRNP200, TXNL4A, SNRNP40, SNRPB, SNRPD1, SNRPD2, SNRPD3, SNRPE, SNRPF, SNRPG, DDX23, CD2BP2, PPIH, SNU13, EFTUD2, SART1 and USP39, plus LSM2, LSM3, LSM4, LSM5, LSM6, LSM7 and LSM8. Interacts directly with PRPF4. Part of a heteromeric complex containing PPIH, PRPF3 and PRPF4 that is stable in the absence of RNA. Interacts with SART3; the interaction is direct and recruits the deubiquitinase USP4 to PRPF3. Interacts with PRPF19. Interacts ('Lys-63'-linked polyubiquitinated) with PRPF8 (via the MPN (JAB/Mov34) domain); may stabilize the U4/U6-U5 tri-snRNP complex. Interacts with ERCC6. Post-translationally, ubiquitinated. Undergoes 'Lys-63'-linked polyubiquitination by PRPF19 and deubiquitination by USP4. 'Lys-63'-linked ubiquitination increases the affinity for PRPF8 and may regulate the assembly of the U4/U6-U5 tri-snRNP complex. As to expression, highly expressed in retina, liver, kidney and blood. Detected at lower levels in heart and brain.

It is found in the nucleus. The protein resides in the nucleus speckle. In terms of biological role, plays a role in pre-mRNA splicing as component of the U4/U6-U5 tri-snRNP complex that is involved in spliceosome assembly, and as component of the precatalytic spliceosome (spliceosome B complex). The polypeptide is U4/U6 small nuclear ribonucleoprotein Prp3 (PRPF3) (Homo sapiens (Human)).